A 472-amino-acid chain; its full sequence is Tryptophanase (472 aa).

Position 270 is an N6-(pyridoxal phosphate)lysine (lysine 270).

Belongs to the beta-eliminating lyase family. As to quaternary structure, homotetramer. Pyridoxal 5'-phosphate serves as cofactor.

The catalysed reaction is L-tryptophan + H2O = indole + pyruvate + NH4(+). Its pathway is amino-acid degradation; L-tryptophan degradation via pyruvate pathway; indole and pyruvate from L-tryptophan: step 1/1. This chain is Tryptophanase, found in Haemophilus influenzae (strain 86-028NP).